The primary structure comprises 547 residues: TBCC domain-containing protein 1 (547 aa).

The C-CAP/cofactor C-like domain maps to 304–435 (PHTHRMVVMS…LEDHMAHTGL (132 aa)).

This sequence belongs to the TBCC family.

Its subcellular location is the cytoplasm. The protein resides in the cytoskeleton. It localises to the microtubule organizing center. The protein localises to the centrosome. It is found in the spindle pole. Functionally, may play a role in the regulation of centrosome and Golgi apparatus positioning. This Xenopus tropicalis (Western clawed frog) protein is TBCC domain-containing protein 1 (tbccd1).